Reading from the N-terminus, the 421-residue chain is Phosphoribosylamine--glycine ligase (421 aa).

One can recognise an ATP-grasp domain in the interval 108-314 (KEIMVKYNVP…FAQNIDDIMM (207 aa)). ATP is bound at residue 134-195 (IEEQGAPIVV…EEFLDGEEFS (62 aa)). Mg(2+) contacts are provided by Glu284 and Asn286.

Belongs to the GARS family. It depends on Mg(2+) as a cofactor. Mn(2+) serves as cofactor.

It carries out the reaction 5-phospho-beta-D-ribosylamine + glycine + ATP = N(1)-(5-phospho-beta-D-ribosyl)glycinamide + ADP + phosphate + H(+). It participates in purine metabolism; IMP biosynthesis via de novo pathway; N(1)-(5-phospho-D-ribosyl)glycinamide from 5-phospho-alpha-D-ribose 1-diphosphate: step 2/2. The chain is Phosphoribosylamine--glycine ligase from Streptococcus pyogenes serotype M1.